Here is a 261-residue protein sequence, read N- to C-terminus: tRNA (guanine-N(7)-)-methyltransferase (261 aa).

4 residues coordinate S-adenosyl-L-methionine: glutamate 75, glutamate 100, aspartate 127, and aspartate 150. Residue aspartate 150 is part of the active site. Residue lysine 154 coordinates substrate. The interaction with RNA stretch occupies residues 156–161 (RHNKRR). Residues aspartate 186 and 223 to 226 (THFE) contribute to the substrate site.

It belongs to the class I-like SAM-binding methyltransferase superfamily. TrmB family.

It catalyses the reaction guanosine(46) in tRNA + S-adenosyl-L-methionine = N(7)-methylguanosine(46) in tRNA + S-adenosyl-L-homocysteine. Its pathway is tRNA modification; N(7)-methylguanine-tRNA biosynthesis. Functionally, catalyzes the formation of N(7)-methylguanine at position 46 (m7G46) in tRNA. The protein is tRNA (guanine-N(7)-)-methyltransferase of Xanthomonas axonopodis pv. citri (strain 306).